A 327-amino-acid polypeptide reads, in one-letter code: MDLYPEENTQSEQSQNSENNMQIFKSETSDGFSSDLKISNDQLKNISKTQLTLEKEKIFKMPNVLSQVMKKAFSRKNEILYCVSTKELSVDIHDATGKVYLPLITKEEINKRLSSLKPEVRRTMSMVHLGAVKILLKAQFRNGIDTPIKIALIDDRINSRRDCLLGAAKGNLAYGKFMFTVYPKFGISLNTQRLNQTLSLIHDFENKNLMNKGDKVMTITYIVGYALTNSHHSIDYQSNATIELEDVFQEIGNIQQSEFCTIQNDECNWAIDIAQNKALLGAKTKTQIGNSLQIGNIASSSSTENELARVSQNIDLLKNKLKEICGE.

Residues 297–327 (IASSSSTENELARVSQNIDLLKNKLKEICGE) adopt a coiled-coil conformation.

The protein belongs to the caulimoviridae movement protein family. As to quaternary structure, homotrimer, through the coiled-coil domain. Interacts with VAP. May interact (via N-terminus) with host prenylated Rab acceptor protein 1D (PRA1D).

Its subcellular location is the host cell junction. It localises to the host plasmodesma. Its function is as follows. Transports viral genome to neighboring plant cells directly through plasmosdesmata, without any budding. The movement protein allows efficient cell to cell propagation, by bypassing the host cell wall barrier. Acts by forming tubules structures that increase the size exclusion limit (SEL) of plasmodesmata, thereby allowing viral ribonucleocapsids to spread directly to neighboring cells. This Cauliflower mosaic virus (strain D/H) (CaMV) protein is Movement protein.